Reading from the N-terminus, the 90-residue chain is Large ribosomal subunit protein bL27 (90 aa).

The interval 1–21 is disordered; sequence MASKKAGGSTRNGRDSEAKRL.

This sequence belongs to the bacterial ribosomal protein bL27 family.

The sequence is that of Large ribosomal subunit protein bL27 from Neisseria gonorrhoeae (strain ATCC 700825 / FA 1090).